The chain runs to 323 residues: Ribose 1,5-bisphosphate isomerase (323 aa).

Substrate is bound by residues 22 to 25 (RGAA) and Arg65. The Proton acceptor role is filled by Cys130. Asp199 (proton donor) is an active-site residue. Residues 209-210 (NK) and Lys235 contribute to the substrate site. Lys210 is covalently cross-linked (Glycyl lysine isopeptide (Lys-Gly) (interchain with G-Cter in SAMP2)).

This sequence belongs to the eIF-2B alpha/beta/delta subunits family. R15P isomerase subfamily.

The enzyme catalyses alpha-D-ribose 1,5-bisphosphate = D-ribulose 1,5-bisphosphate. Catalyzes the isomerization of ribose 1,5-bisphosphate (R15P) to ribulose 1,5-bisphosphate (RuBP), the CO(2) acceptor and substrate for RubisCO. Functions in an archaeal AMP degradation pathway, together with AMP phosphorylase and RubisCO. This Haloferax volcanii (strain ATCC 29605 / DSM 3757 / JCM 8879 / NBRC 14742 / NCIMB 2012 / VKM B-1768 / DS2) (Halobacterium volcanii) protein is Ribose 1,5-bisphosphate isomerase.